The primary structure comprises 591 residues: Pentatricopeptide repeat-containing protein At2g35130 (591 aa).

PPR repeat units follow at residues 154–188 (DVIC…RYVP), 189–223 (TEDT…HVSP), 227–262 (GVTV…RCKP), 263–297 (TTET…QCKP), 298–332 (NICT…GLEP), 333–367 (DVYV…GCEP), 368–402 (DRAS…GIAP), 403–437 (TMKS…GVEP), 438–472 (DTFV…PCTA), 473–507 (DIST…NFRP), 508–542 (DVVT…GCAP), and 543–573 (DGGT…MHKG).

The protein belongs to the PPR family. P subfamily.

In Arabidopsis thaliana (Mouse-ear cress), this protein is Pentatricopeptide repeat-containing protein At2g35130.